Here is a 149-residue protein sequence, read N- to C-terminus: Calmodulin (149 aa).

Ala-2 carries the post-translational modification N-acetylalanine. 4 consecutive EF-hand domains span residues 8–43 (EQIA…LGQN), 44–79 (PTEA…KMKD), 81–116 (DSEE…LGEK), and 117–149 (LTDE…MTAK). Ca(2+)-binding residues include Asp-21, Asp-23, Asp-25, Thr-27, Glu-32, Asp-57, Asp-59, Asn-61, Thr-63, Glu-68, Asp-94, Asp-96, Asn-98, Tyr-100, and Glu-105. Lys-116 carries the post-translational modification N6,N6,N6-trimethyllysine. Ca(2+) contacts are provided by Asp-130, Asp-132, Asp-134, Gln-136, and Glu-141.

It belongs to the calmodulin family.

Functionally, calmodulin acts as part of a calcium signal transduction pathway by mediating the control of a large number of enzymes, ion channels, aquaporins and other proteins through calcium-binding. Calcium-binding is required for the activation of calmodulin. Among the enzymes to be stimulated by the calmodulin-calcium complex are a number of protein kinases, such as myosin light-chain kinases and calmodulin-dependent protein kinase type II (CaMK2), and phosphatases. The chain is Calmodulin (calm) from Epinephelus akaara (Hong Kong grouper).